Consider the following 157-residue polypeptide: Protein Smg (157 aa).

Belongs to the Smg family.

This chain is Protein Smg, found in Klebsiella pneumoniae (strain 342).